Consider the following 471-residue polypeptide: Ribulose bisphosphate carboxylase large chain (471 aa).

K5 carries the post-translational modification N6,N6,N6-trimethyllysine. The substrate site is built by N114 and T164. The Proton acceptor role is filled by K166. K168 is a binding site for substrate. Positions 192, 194, and 195 each coordinate Mg(2+). K192 bears the N6-carboxylysine mark. H285 serves as the catalytic Proton acceptor. Positions 286, 318, and 370 each coordinate substrate.

This sequence belongs to the RuBisCO large chain family. Type I subfamily. In terms of assembly, heterohexadecamer of 8 large chains and 8 small chains; disulfide-linked. The disulfide link is formed within the large subunit homodimers. Requires Mg(2+) as cofactor. Post-translationally, the disulfide bond which can form in the large chain dimeric partners within the hexadecamer appears to be associated with oxidative stress and protein turnover.

The protein resides in the plastid. It is found in the chloroplast. It catalyses the reaction 2 (2R)-3-phosphoglycerate + 2 H(+) = D-ribulose 1,5-bisphosphate + CO2 + H2O. The catalysed reaction is D-ribulose 1,5-bisphosphate + O2 = 2-phosphoglycolate + (2R)-3-phosphoglycerate + 2 H(+). In terms of biological role, ruBisCO catalyzes two reactions: the carboxylation of D-ribulose 1,5-bisphosphate, the primary event in carbon dioxide fixation, as well as the oxidative fragmentation of the pentose substrate in the photorespiration process. Both reactions occur simultaneously and in competition at the same active site. This chain is Ribulose bisphosphate carboxylase large chain, found in Chiococca alba (West Indian milkberry).